Reading from the N-terminus, the 547-residue chain is Dihydroxy-acid dehydratase (547 aa).

Aspartate 78 is a Mg(2+) binding site. Cysteine 119 is a [2Fe-2S] cluster binding site. Mg(2+) contacts are provided by aspartate 120 and lysine 121. Lysine 121 is subject to N6-carboxylysine. [2Fe-2S] cluster is bound at residue cysteine 191. Position 439 (glutamate 439) interacts with Mg(2+). Residue serine 464 is the Proton acceptor of the active site.

Belongs to the IlvD/Edd family. As to quaternary structure, homodimer. [2Fe-2S] cluster serves as cofactor. Requires Mg(2+) as cofactor.

It catalyses the reaction (2R)-2,3-dihydroxy-3-methylbutanoate = 3-methyl-2-oxobutanoate + H2O. The enzyme catalyses (2R,3R)-2,3-dihydroxy-3-methylpentanoate = (S)-3-methyl-2-oxopentanoate + H2O. It functions in the pathway amino-acid biosynthesis; L-isoleucine biosynthesis; L-isoleucine from 2-oxobutanoate: step 3/4. It participates in amino-acid biosynthesis; L-valine biosynthesis; L-valine from pyruvate: step 3/4. In terms of biological role, functions in the biosynthesis of branched-chain amino acids. Catalyzes the dehydration of (2R,3R)-2,3-dihydroxy-3-methylpentanoate (2,3-dihydroxy-3-methylvalerate) into 2-oxo-3-methylpentanoate (2-oxo-3-methylvalerate) and of (2R)-2,3-dihydroxy-3-methylbutanoate (2,3-dihydroxyisovalerate) into 2-oxo-3-methylbutanoate (2-oxoisovalerate), the penultimate precursor to L-isoleucine and L-valine, respectively. The protein is Dihydroxy-acid dehydratase of Methanospirillum hungatei JF-1 (strain ATCC 27890 / DSM 864 / NBRC 100397 / JF-1).